Here is a 154-residue protein sequence, read N- to C-terminus: Ribonuclease H (154 aa).

The RNase H type-1 domain occupies 5–147 (GKSRVAIYTD…ADMLARGEVE (143 aa)). 4 residues coordinate Mg(2+): aspartate 14, glutamate 53, aspartate 75, and aspartate 139.

The protein belongs to the RNase H family. As to quaternary structure, monomer. Mg(2+) is required as a cofactor.

It is found in the cytoplasm. It carries out the reaction Endonucleolytic cleavage to 5'-phosphomonoester.. Functionally, endonuclease that specifically degrades the RNA of RNA-DNA hybrids. This is Ribonuclease H from Anaplasma marginale (strain St. Maries).